A 94-amino-acid polypeptide reads, in one-letter code: Large ribosomal subunit protein eL42 (94 aa).

Residues cysteine 11, cysteine 14, cysteine 71, and cysteine 74 each contribute to the Zn(2+) site. Residues 11–74 (CPFCKKHTIH…LDLRFRCTEC (64 aa)) form a C4-type zinc finger.

It belongs to the eukaryotic ribosomal protein eL42 family. Part of the 50S ribosomal subunit. It depends on Zn(2+) as a cofactor.

Its function is as follows. Binds to the 23S rRNA. The protein is Large ribosomal subunit protein eL42 of Pyrococcus furiosus (strain ATCC 43587 / DSM 3638 / JCM 8422 / Vc1).